An 829-amino-acid polypeptide reads, in one-letter code: GTPase-activating protein GYP5 (829 aa).

A disordered region spans residues 1 to 243 (MVEAGAKISK…VPPPLSEELK (243 aa)). The span at 38–50 (AEHETQDSAKAQE) shows a compositional bias: basic and acidic residues. Over residues 101 to 115 (TAAAAGALPGIGRAR) the composition is skewed to low complexity. Basic and acidic residues-rich tracts occupy residues 142-151 (KDAKISERAE) and 189-220 (KQAEGEQSRPEGEQGRPENKNKKAKDKHDDLP). Residues 279-341 (INRLRVNAQE…DEEEEEMRKI (63 aa)) are a coiled coil. The Rab-GAP TBC domain occupies 371-550 (GIPKQIRGII…RILDVIFVEG (180 aa)). 2 disordered regions span residues 600–620 (GKEDTNAIQNAEVSDSSSKSS) and 790–812 (LKKNRANTSVEHGEDSSSEPRVR). Residues 666–803 (FQREAQYEEM…RANTSVEHGE (138 aa)) adopt a coiled-coil conformation. The span at 800-811 (EHGEDSSSEPRV) shows a compositional bias: basic and acidic residues.

Belongs to the GYP5 family.

It is found in the cytoplasm. GTPase-activating protein which accelerates the GTP hydrolysis rate of several GTPases. Involved in ER to Golgi trafficking and polarized exocytosis. The chain is GTPase-activating protein GYP5 (GYP5) from Eremothecium gossypii (strain ATCC 10895 / CBS 109.51 / FGSC 9923 / NRRL Y-1056) (Yeast).